Here is a 275-residue protein sequence, read N- to C-terminus: MPVKKYNPTSPGTRFMTVSTFEEITKKEPEKSLLAPLKKTGGRNSYGRITVRHHGGGAKRKYRIIDFKRDKDGIKAKVAAIEYDPNRTAYIALLHYVDGEKRYIIAPHGLKVGDIVESGENADIKPGNALPLENIPVGTEIHNIELKPGKGGQLVRSAGNVAQLMAKEGNYAQIRLPSGEVRMVSLKCKATIGQVGNIDHENVSIGKAGRKRWMGIRPTVRGVVMNPVDHPHGGGEGKSPIGRPSPVTPWGKPTLGYKTRKKNKASDKFIIKRRK.

Residues 224 to 275 (VMNPVDHPHGGGEGKSPIGRPSPVTPWGKPTLGYKTRKKNKASDKFIIKRRK) are disordered. The span at 264–275 (KASDKFIIKRRK) shows a compositional bias: basic and acidic residues.

This sequence belongs to the universal ribosomal protein uL2 family. In terms of assembly, part of the 50S ribosomal subunit. Forms a bridge to the 30S subunit in the 70S ribosome.

Functionally, one of the primary rRNA binding proteins. Required for association of the 30S and 50S subunits to form the 70S ribosome, for tRNA binding and peptide bond formation. It has been suggested to have peptidyltransferase activity; this is somewhat controversial. Makes several contacts with the 16S rRNA in the 70S ribosome. This is Large ribosomal subunit protein uL2 from Acetivibrio thermocellus (strain ATCC 27405 / DSM 1237 / JCM 9322 / NBRC 103400 / NCIMB 10682 / NRRL B-4536 / VPI 7372) (Clostridium thermocellum).